A 399-amino-acid polypeptide reads, in one-letter code: Protein DDI1 homolog 2 (399 aa).

The Ubiquitin-like domain occupies 1-81; the sequence is MLLTVYCVRR…VILRQKENAD (81 aa). Residues 99–134 are disordered; that stretch reads IAVPGTSNPQQRQLPRTQAQHSSPGEMASSPQGLDN. Positions 103–131 are enriched in polar residues; it reads GTSNPQQRQLPRTQAQHSSPGEMASSPQG. Phosphothreonine is present on threonine 104. Phosphoserine occurs at positions 121, 128, 150, and 194. Aspartate 252 is a catalytic residue. Residues 376–395 carry the Ubiquitin-binding motif; that stretch reads EEIADQELAEAIQKSAEDAE.

Belongs to the DDI1 family. As to quaternary structure, homodimer.

The protein resides in the cytoplasm. It localises to the cytosol. The protein localises to the chromosome. Aspartic protease that mediates the cleavage of NFE2L1/NRF1 at 'Leu-104', thereby promoting release of NFE2L1/NRF1 from the endoplasmic reticulum membrane. Ubiquitination of NFE2L1/NRF1 is a prerequisite for cleavage, suggesting that DDI2 specifically recognizes and binds ubiquitinated NFE2L1/NRF1. Seems to act as a proteasomal shuttle which links the proteasome and replication fork proteins like RTF2. Required, with DDI1, for cellular survival following replication stress. Together or redudantly with DDI1, removes RTF2 from stalled forks to allow cell cycle progression after replication stress and maintains genome integrity. This is Protein DDI1 homolog 2 from Mus musculus (Mouse).